The chain runs to 262 residues: MNDILAKILAVKAEEVATARQMRSEAELLREAQARQDVRGFAQAIEDKISQGKAGVIAEIKKASPSKGVLRENFDPAEIAASYAMHGAACLSVLTDVQFFQGSHDNLRRARAACSLPVLRKDFIIDPYQIISARAMGADCVLLIVAALAPAQLRDLETLAIDLGMDVLVEVHDAKELDAALALRTPLIGINNRNLRTFETTLQTTLDLLPMIPAGKRVVTESGILKPEDVRLMREHDVQAFLVGEAFMRANDPGVELARLVA.

It belongs to the TrpC family.

The enzyme catalyses 1-(2-carboxyphenylamino)-1-deoxy-D-ribulose 5-phosphate + H(+) = (1S,2R)-1-C-(indol-3-yl)glycerol 3-phosphate + CO2 + H2O. It participates in amino-acid biosynthesis; L-tryptophan biosynthesis; L-tryptophan from chorismate: step 4/5. The protein is Indole-3-glycerol phosphate synthase of Bordetella bronchiseptica (strain ATCC BAA-588 / NCTC 13252 / RB50) (Alcaligenes bronchisepticus).